Reading from the N-terminus, the 555-residue chain is Exodeoxyribonuclease 7 large subunit (555 aa).

This sequence belongs to the XseA family. In terms of assembly, heterooligomer composed of large and small subunits.

Its subcellular location is the cytoplasm. It catalyses the reaction Exonucleolytic cleavage in either 5'- to 3'- or 3'- to 5'-direction to yield nucleoside 5'-phosphates.. Functionally, bidirectionally degrades single-stranded DNA into large acid-insoluble oligonucleotides, which are then degraded further into small acid-soluble oligonucleotides. The sequence is that of Exodeoxyribonuclease 7 large subunit from Chlamydia felis (strain Fe/C-56) (Chlamydophila felis).